A 152-amino-acid chain; its full sequence is UPF0266 membrane protein YobD (152 aa).

3 helical membrane passes run 6 to 26 (LVLI…QFIM), 45 to 65 (VDSV…VTSH), and 67 to 87 (AQMT…IFWI).

Belongs to the UPF0266 family.

The protein resides in the cell inner membrane. The chain is UPF0266 membrane protein YobD from Salmonella paratyphi A (strain ATCC 9150 / SARB42).